A 1608-amino-acid chain; its full sequence is MREAAAALVPPPAFAVTPAAAMEEPPPPPPPPPPPPEPETESEPECCLAARQEGTLGDSACKSPESDLEDFSDETNTENLYGTSPPSTPRQMKRMSTKHQRNNVGRPASRSNLKEKMNAPNQPPHKDTGKTVENVEEYSYKQEKKIRAALRTTERDRKKNVQCSFMLDSVGGSLPKKSIPDVDLNKPYLSLGCSNAKLPVSVPMPIARPARQTSRTDCPADRLKFFETLRLLLKLTSVSKKKDREQRGQENTSGFWLNRSNELIWLELQAWHAGRTINDQDFFLYTARQAIPDIINEILTFKVDYGSFAFVRDRAGFNGTSVEGQCKATPGTKIVGYSTHHEHLQRQRVSFEQVKRIMELLEYIEALYPSLQALQKDYEKYAAKDFQDRVQALCLWLNITKDLNQKLRIMGTVLGIKNLSDIGWPVFEIPSPRPSKGNEPEYEGDDTEGELKELESSTDESEEEQISDPRVPEIRQPIDNSFDIQSRDCISKKLERLESEDDSLGWGAPDWSTEAGFSRHCLTSIYRPFVDKALKQMGLRKLILRLHKLMDGSLQRARIALVKNDRPVEFSEFPDPMWGSDYVQLSRTPPSSEEKCSAVSWEELKAMDLPSFEPAFLVLCRVLLNVIHECLKLRLEQRPAGEPSLLSIKQLVRECKEVLKGGLLMKQYYQFMLQEVLEDLEKPDCNIDAFEEDLHKMLMVYFDYMRSWIQMLQQLPQASHSLKNLLEEEWNFTKEITHYIRGGEAQAGKLFCDIAGMLLKSTGSFLEFGLQESCAEFWTSADDSSASDEIRRSVIEISRALKELFHEARERASKALGFAKMLRKDLEIAAEFRLSAPVRDLLDVLKSKQYVKVQIPGLENLQMFVPDTLAEEKSIILQLLNAAAGKDCSKDSDDVLIDAYLLLTKHGDRARDSEDSWGTWEAQPVKVVPQVETVDTLRSMQVDNLLLVVMQSAHLTIQRKAFQQSIEGLMTLCQEQTSSQPVIAKALQQLKNDALELCNRISNAIDRVDHMFTSEFDAEVDESESVTLQQYYREAMIQGYNFGFEYHKEVVRLMSGEFRQKIGDKYISFARKWMNYVLTKCESGRGTRPRWATQGFDFLQAIEPAFISALPEDDFLSLQALMNECIGHVIGKPHSPVTGLYLAIHRNSPRPMKVPRCHSDPPNPHLIIPTPEGFSTRSMPSDARSHGSPAAAAAAAAAAVAASRPSPSGGDSVLPKSISSAHDTRGSSVPENDRLASIAAELQFRSLSRHSSPTEERDEPAYPRGDSSGSTRRSWELRTLISQSKDTASKLGPIEAIQKSVRLFEEKRYREMRRKNIIGQVCDTPKSYDNVMHVGLRKVTFKWQRGNKIGEGQYGKVYTCISVDTGELMAMKEIRFQPNDHKTIKETADELKIFEGIKHPNLVRYFGVELHREEMYIFMEYCDEGTLEEVSRLGLQEHVIRLYSKQITIAINVLHEHGIVHRDIKGANIFLTSSGLIKLGDFGCSVKLKNNAQTMPGEVNSTLGTAAYMAPEVITRAKGEGHGRAADIWSLGCVVIEMVTGKRPWHEYEHNFQIMYKVGMGHKPPIPERLSPEGKDFLSHCLESDPKMRWTASQLLDHSFVKVCTDEE.

A compositionally biased stretch (low complexity) spans 1–23; that stretch reads MREAAAALVPPPAFAVTPAAAME. Disordered regions lie at residues 1–136 and 429–478; these read MREA…ENVE and IPSP…RQPI. The segment covering 24–37 has biased composition (pro residues); that stretch reads EPPPPPPPPPPPPE. Residues 66–76 are compositionally biased toward acidic residues; the sequence is SDLEDFSDETN. The residue at position 84 (Ser-84) is a Phosphoserine. Basic residues predominate over residues 91-101; sequence QMKRMSTKHQR. At Ser-431 the chain carries Phosphoserine. Thr-447 is modified (phosphothreonine). Phosphoserine is present on residues Ser-456 and Ser-457. The segment covering 456 to 466 has biased composition (acidic residues); sequence SSTDESEEEQI. A Phosphothreonine modification is found at Thr-458. 3 positions are modified to phosphoserine: Ser-461, Ser-481, and Ser-499. 3 disordered regions span residues 1157 to 1190, 1202 to 1231, and 1244 to 1274; these read CHSD…GSPA, ASRP…SVPE, and FRSL…TRRS. The segment covering 1217–1230 has biased composition (polar residues); it reads SISSAHDTRGSSVP. 2 positions are modified to phosphoserine: Ser-1252 and Ser-1274. Basic and acidic residues predominate over residues 1252–1261; that stretch reads SPTEERDEPA. The region spanning 1343–1601 is the Protein kinase domain; the sequence is WQRGNKIGEG…ASQLLDHSFV (259 aa). Residues 1349–1357 and Lys-1372 each bind ATP; that span reads IGEGQYGKV. The active-site Proton acceptor is the Asp-1463.

Belongs to the protein kinase superfamily. STE Ser/Thr protein kinase family. MAP kinase kinase kinase subfamily. Monomer and homodimer. Homodimerization enhances kinase activity. Interacts with TRAF4; this promotes homodimerization. Binds both upstream activators and downstream substrates in multimolecular complexes. Interacts with AXIN1 and DIXDC1; interaction with DIXDC1 prevents interaction with AXIN1. Interacts with GADD45 and MAP2K6. Interacts with ZFP36; this interaction enhances the association with SH3KBP1/CIN85. Interacts with SH3KBP1; this interaction enhances the association with ZFP36. Interacts with CDC42. Requires Mg(2+) as cofactor. Expressed at high levels in heart, placenta, skeletal muscle and pancreas, and at lower levels in other tissues.

It localises to the cytoplasm. The protein resides in the perinuclear region. The enzyme catalyses L-seryl-[protein] + ATP = O-phospho-L-seryl-[protein] + ADP + H(+). It catalyses the reaction L-threonyl-[protein] + ATP = O-phospho-L-threonyl-[protein] + ADP + H(+). N-terminal autoinhibitory domain interacts with the C-terminal kinase domain, inhibiting kinase activity, and preventing interaction with its substrate, MAP2K6. The GADD45 proteins activate the kinase by binding to the N-terminal domain. Activated by phosphorylation on Thr-1505. Its function is as follows. Component of a protein kinase signal transduction cascade. Activates the CSBP2, P38 and JNK MAPK pathways, but not the ERK pathway. Specifically phosphorylates and activates MAP2K4 and MAP2K6. The polypeptide is Mitogen-activated protein kinase kinase kinase 4 (MAP3K4) (Homo sapiens (Human)).